The following is a 270-amino-acid chain: SAMP-activating enzyme E1 (270 aa).

Residues Gly-42, Asp-63, 70–74, and Lys-87 contribute to the ATP site; that span reads SNLQR. A Glycyl lysine isopeptide (Lys-Gly) (interchain with G-Cter in SAMP2) cross-link involves residue Lys-113. ATP is bound at residue 131–132; that stretch reads DN. Zn(2+)-binding residues include Cys-171 and Cys-174. Cys-188 (glycyl thioester intermediate) is an active-site residue. The Zn(2+) site is built by Cys-245 and Cys-248.

Belongs to the HesA/MoeB/ThiF family. Interacts with NcsA. Requires Zn(2+) as cofactor. Post-translationally, sampylated at Lys-113 with the archaeal ubiquitin-like protein SAMP2. Also sampylated with SAMP1.

It carries out the reaction [small archaeal modifier protein]-C-terminal Gly-Gly + ATP + H(+) = [small archaeal modifier protein]-C-terminal Gly-Gly-AMP + diphosphate. In terms of biological role, likely activates multiple ubiquitin-like SAMPs for protein conjugation as well as for sulfur transfer, via ATP-dependent adenylation at their C-terminus. In fact, it is required for the formation of all three SAMP1-, SAMP2- and SAMP3-protein conjugates, and for molybdenum cofactor (MoCo) biosynthesis and thiolation of tRNAs. This chain is SAMP-activating enzyme E1 (ubaA), found in Haloferax volcanii (strain ATCC 29605 / DSM 3757 / JCM 8879 / NBRC 14742 / NCIMB 2012 / VKM B-1768 / DS2) (Halobacterium volcanii).